The chain runs to 352 residues: MTELELLGPRASGEPLGTAVLKAVAEDFQVDEVLDIPLSGQGEHLWLWVEKRDLNTEEAARRLARAAGVPVRSISYAGLKDRQALTRQWFSLHLPGKADPDLSRAEDASLRVLKQVRHQRKLQRGAHSANGFTLRLTALAADHQAVDARLEQLRQQGVPNYFGTQRFGHGGGNVHDALDWAARKALPEQRNVRSRLLSAGRSYLFNQLLAARVADGSWARAQVGDLLAFTDSRSFFPAGEAECADPRLAILDLHPTGPMWGEGASPAGAAPAQLENAIGARQPALCQWLAQAGMDHERRILRLPIGGLTWHYPEPDILQLEFVLPAGCFATVVVREVVDLVSAGQTDSPCVF.

Asp-81 (nucleophile) is an active-site residue. The TRUD domain occupies 157–303 (GVPNYFGTQR…MDHERRILRL (147 aa)).

This sequence belongs to the pseudouridine synthase TruD family.

It carries out the reaction uridine(13) in tRNA = pseudouridine(13) in tRNA. Its function is as follows. Responsible for synthesis of pseudouridine from uracil-13 in transfer RNAs. This chain is tRNA pseudouridine synthase D, found in Pseudomonas putida (strain ATCC 700007 / DSM 6899 / JCM 31910 / BCRC 17059 / LMG 24140 / F1).